A 434-amino-acid chain; its full sequence is Beta-enolase (434 aa).

The residue at position 2 (Ala-2) is an N-acetylalanine. Thr-72 carries the phosphothreonine modification. Residues Ser-83 and Ser-157 each carry the phosphoserine modification. Substrate is bound by residues His-158 and Glu-167. Ser-176 carries the post-translational modification Phosphoserine. At Thr-205 the chain carries Phosphothreonine. The active-site Proton donor is the Glu-210. The residue at position 229 (Thr-229) is a Phosphothreonine. Tyr-236 carries the phosphotyrosine modification. Asp-245 is a Mg(2+) binding site. Ser-263 is modified (phosphoserine). Residues Glu-293 and Asp-318 each coordinate substrate. 2 residues coordinate Mg(2+): Glu-293 and Asp-318. Catalysis depends on Lys-343, which acts as the Proton acceptor. Substrate-binding positions include 370-373 and Lys-394; that span reads SHRS.

The protein belongs to the enolase family. Mammalian enolase is composed of 3 isozyme subunits, alpha, beta and gamma, which can form homodimers or heterodimers which are cell-type and development-specific. In vitro, interacts with several glycolytic enzymes including PKM, PGM, CKM and ALDO. Also binds PLG and troponin, in vitro. Interacts with PNKD. It depends on Mg(2+) as a cofactor. Brain (at protein level). The alpha/alpha homodimer is expressed in embryo and in most adult tissues. The alpha/beta heterodimer and the beta/beta homodimer are found in striated muscle, and the alpha/gamma heterodimer and the gamma/gamma homodimer in neurons. In striated muscle, the fiber-type order of ENO3 expression is IIB &gt; IIX &gt; IIA &gt; I.

It is found in the cytoplasm. It catalyses the reaction (2R)-2-phosphoglycerate = phosphoenolpyruvate + H2O. It participates in carbohydrate degradation; glycolysis; pyruvate from D-glyceraldehyde 3-phosphate: step 4/5. Glycolytic enzyme that catalyzes the conversion of 2-phosphoglycerate to phosphoenolpyruvate. Appears to have a function in striated muscle development and regeneration. The protein is Beta-enolase (Eno3) of Mus musculus (Mouse).